The primary structure comprises 240 residues: Proline-rich antigen homolog (240 aa).

Pro residues-rich tracts occupy residues 1 to 31 and 38 to 78; these read MTEQ…PAAP and APPP…PPGP. The segment at 1–78 is disordered; it reads MTEQPPPGGS…GGYAPPPPGP (78 aa). Residues 89–233 form the RDD domain; sequence TPWITRVLAA…KRQTLADKIM (145 aa). Transmembrane regions (helical) follow at residues 98-118, 142-162, and 203-223; these read AFID…IMLV, SMIG…YLVW, and LAHF…LWDA.

This sequence belongs to the mycobacterial Pra family.

The protein resides in the cell membrane. The sequence is that of Proline-rich antigen homolog from Mycobacterium tuberculosis (strain CDC 1551 / Oshkosh).